A 98-amino-acid chain; its full sequence is Small ribosomal subunit protein bS20 (98 aa).

A disordered region spans residues 76-98 (HPNNGARKKSRLASKLKPIEQTA).

Belongs to the bacterial ribosomal protein bS20 family.

Binds directly to 16S ribosomal RNA. This is Small ribosomal subunit protein bS20 from Trichormus variabilis (strain ATCC 29413 / PCC 7937) (Anabaena variabilis).